A 151-amino-acid chain; its full sequence is UPF0178 protein Ping_0754 (151 aa).

The protein belongs to the UPF0178 family.

The protein is UPF0178 protein Ping_0754 of Psychromonas ingrahamii (strain DSM 17664 / CCUG 51855 / 37).